A 559-amino-acid chain; its full sequence is MAAQGFLLIASFLLILLVLAKPLGSGLARLIAAVPLPGVAGVERILWRTLGITDHEMNWRQYLLALLTLNLLGLGILFCLLFWQEWLPLNPQRLPGLSWDLALNTAVSFVTNTNWQAYSGESTLSYFSQMAGLTVQNFLSAATGIAVVFALIRAFTRQNVHTLGNAWQDLVRITLWILFPVALIIALFFIQQGVPQNLSAYQPITTLEGAKQLLPMGPVASQEAIKMLGTNGGGFFNANSSHPFENPTALTNLAQMLAIFLIPAALCFAFGEAAGDRRQGRALLWAMSFIFVVCVAVVMWAEVQGNPHLLAAGADSSVNMEGKEARFGVLASSLFAVVTTAASCGAVNAMHDSFTALGGMVPMWLMQIGEVVFGGVGSGLYGMLLFVLLAVFIAGLMIGRTPEYLGKKIDVREMKMTALAILVTPMLVLLGSALAMMTDAGRSAMLNPGPHGFSEVLYAVSSAANNNGSAFAGLSANSPFWNCLLAFCMFVGRFGVIIPVMAIAGSLVSKKVQPASQGTLATHGALFIGLLIGTVLLVGALTFIPALALGPVAEHFSLP.

13 helical membrane passes run Gly-5–Ser-25, Leu-27–Trp-47, Leu-63–Trp-83, Gly-132–Ile-152, Leu-170–Ile-190, Leu-253–Ala-273, Leu-283–Val-303, Phe-327–Val-347, Ala-356–Val-376, Gly-379–Gly-399, Met-416–Met-436, Leu-484–Ala-504, and Gly-524–Ile-544.

It belongs to the KdpA family. In terms of assembly, the system is composed of three essential subunits: KdpA, KdpB and KdpC.

The protein localises to the cell inner membrane. In terms of biological role, part of the high-affinity ATP-driven potassium transport (or Kdp) system, which catalyzes the hydrolysis of ATP coupled with the electrogenic transport of potassium into the cytoplasm. This subunit binds the periplasmic potassium ions and delivers the ions to the membrane domain of KdpB through an intramembrane tunnel. The protein is Potassium-transporting ATPase potassium-binding subunit of Salmonella typhi.